Here is a 2471-residue protein sequence, read N- to C-terminus: Probable polyketide synthase 24 (2471 aa).

The Ketosynthase family 3 (KS3) domain maps to 21 to 449 (ENLVAIVGVG…GSNCCLVLSQ (429 aa)). Residues Cys190, His332, and His372 each act as for beta-ketoacyl synthase activity in the active site. Positions 654-687 (GIKASFMLGHSLGEVTTAYCSGMIDIDQLCYLIY) are acyl/malonyl transferase. Residue Ser664 is the For acyl/malonyl transferase activity of the active site. The N-terminal hotdog fold stretch occupies residues 953–1075 (ISILGNSMQD…SNFHLNSNDN (123 aa)). The PKS/mFAS DH domain occupies 953 to 1245 (ISILGNSMQD…VKSLTPVKDP (293 aa)). The active-site Proton acceptor; for dehydratase activity is the His987. The tract at residues 1094–1245 (NLSSIPWDEF…VKSLTPVKDP (152 aa)) is C-terminal hotdog fold. Asp1157 serves as the catalytic Proton donor; for dehydratase activity. The stretch at 1426 to 1469 (IINEQQQQQQQQQQQQQQQQQQQQQLLNNENNKESLKNLLVNCN) forms a coiled coil. The Carrier domain maps to 2336–2413 (SSSTNVKNKF…MVYQIINDSL (78 aa)). Ser2373 carries the O-(pantetheine 4'-phosphoryl)serine modification.

Pantetheine 4'-phosphate is required as a cofactor.

Probable polyketide synthase. The protein is Probable polyketide synthase 24 (pks24) of Dictyostelium discoideum (Social amoeba).